A 330-amino-acid polypeptide reads, in one-letter code: Carbonic anhydrase (330 aa).

Residues 1–109 form a chloroplast transit peptide-like region; sequence MSAASAFAMN…AATRIDQITA (109 aa).

It belongs to the beta-class carbonic anhydrase family.

It is found in the cytoplasm. It carries out the reaction hydrogencarbonate + H(+) = CO2 + H2O. Its function is as follows. Reversible hydration of carbon dioxide. The chain is Carbonic anhydrase from Flaveria bidentis (Coastal plain yellowtops).